A 239-amino-acid chain; its full sequence is Sugar fermentation stimulation protein homolog (239 aa).

This sequence belongs to the SfsA family.

This is Sugar fermentation stimulation protein homolog from Agrobacterium fabrum (strain C58 / ATCC 33970) (Agrobacterium tumefaciens (strain C58)).